The primary structure comprises 300 residues: NADH-cytochrome b5 reductase 1 (300 aa).

Residues Pro-8–Phe-28 form a helical membrane-spanning segment. The segment covering Ser-34–Ser-45 has biased composition (low complexity). The interval Ser-34–Leu-54 is disordered. An FAD-binding FR-type domain is found at Asp-57 to Thr-160. FAD-binding positions include Ala-140 to Gly-155 and Ser-166 to Leu-198.

This sequence belongs to the flavoprotein pyridine nucleotide cytochrome reductase family. Monomer. Component of the 2-(3-amino-3-carboxypropyl)histidine synthase complex composed of DPH1, DPH2, DPH3 and a NADH-dependent reductase, predominantly CBR1. It depends on FAD as a cofactor.

It localises to the mitochondrion outer membrane. It catalyses the reaction 2 Fe(III)-[cytochrome b5] + NADH = 2 Fe(II)-[cytochrome b5] + NAD(+) + H(+). It carries out the reaction 2 Fe(3+)-[Dph3] + NADH = 2 Fe(2+)-[Dph3] + NAD(+) + H(+). It participates in protein modification; peptidyl-diphthamide biosynthesis. In terms of biological role, NADH-dependent reductase for DPH3 and cytochrome b5. Required for the first step of diphthamide biosynthesis, a post-translational modification of histidine which occurs in elongation factor 2. DPH1 and DPH2 transfer a 3-amino-3-carboxypropyl (ACP) group from S-adenosyl-L-methionine (SAM) to a histidine residue, the reaction is assisted by a reduction system comprising DPH3 and a NADH-dependent reductase, predominantly CBR1. By reducing DPH3, also involved in the formation of the tRNA wobble base modification mcm5s 2U (5-methoxycarbonylmethyl-2-thiouridine), mediated by the elongator complex. The cytochrome b5/NADH cytochrome b5 reductase electron transfer system supports the catalytic activity of several sterol biosynthetic enzymes. The chain is NADH-cytochrome b5 reductase 1 (CBR1) from Lodderomyces elongisporus (strain ATCC 11503 / CBS 2605 / JCM 1781 / NBRC 1676 / NRRL YB-4239) (Yeast).